We begin with the raw amino-acid sequence, 229 residues long: Potassium/proton antiporter CemA (229 aa).

3 consecutive transmembrane segments (helical) span residues 7 to 27 (FTPL…SLSF), 107 to 127 (ILHF…SLLG), and 189 to 209 (IISG…KYWI).

Belongs to the CemA family.

It localises to the plastid. The protein localises to the chloroplast inner membrane. It catalyses the reaction K(+)(in) + H(+)(out) = K(+)(out) + H(+)(in). Functionally, contributes to K(+)/H(+) antiport activity by supporting proton efflux to control proton extrusion and homeostasis in chloroplasts in a light-dependent manner to modulate photosynthesis. Prevents excessive induction of non-photochemical quenching (NPQ) under continuous-light conditions. Indirectly promotes efficient inorganic carbon uptake into chloroplasts. The protein is Potassium/proton antiporter CemA of Lactuca sativa (Garden lettuce).